The chain runs to 193 residues: Xanthine phosphoribosyltransferase (193 aa).

Leucine 20 and asparagine 27 together coordinate xanthine. 129–133 contacts 5-phospho-alpha-D-ribose 1-diphosphate; that stretch reads ANGKA. Lysine 157 contributes to the xanthine binding site.

The protein belongs to the purine/pyrimidine phosphoribosyltransferase family. Xpt subfamily. In terms of assembly, homodimer.

The protein resides in the cytoplasm. It catalyses the reaction XMP + diphosphate = xanthine + 5-phospho-alpha-D-ribose 1-diphosphate. Its pathway is purine metabolism; XMP biosynthesis via salvage pathway; XMP from xanthine: step 1/1. In terms of biological role, converts the preformed base xanthine, a product of nucleic acid breakdown, to xanthosine 5'-monophosphate (XMP), so it can be reused for RNA or DNA synthesis. In Bifidobacterium animalis subsp. lactis (strain AD011), this protein is Xanthine phosphoribosyltransferase.